We begin with the raw amino-acid sequence, 1464 residues long: MLLSPSLLLPLLLLLGAPRGCAEGVAAALTPERLLEWQDKGIFVIQSESLKKCIQAGKSVLTLENCKQANKHMLWKWVSNHGLFNIGGSGCLGLNFSAPEQPLSLYECDSTLVSLRWRCDRKMITGPLQYSVQVAHDNTVVASRKYFHKWISYGSGGGDICEYLHKDLHTIKGNAHGMPCMFPFQYNHQWHHECTREGREDDLLWCATTSRYERDEKWGFCPDPTSAEVGCDTIWEKDLNSHICYQFNLLSSLSWSEAHSSCQMQGGALLSITDETEENFIREHMSSKTVEVWMGLNQLDEHAGWQWSDGTPLNYLNWSPEVNFEPFVEDHCGTFSSFIPSAWRSRDCASTLPYVCKKYLNHIDHEIVEKDAWKYYATHCEPGWNPYNRNCYKLQKEEKTWHEALRSCQADNSALIDITSLAEVEFLVTLLGDENASETWIGLSSNKIPVSFEWSNDSSVIFTNWHTLEPQIFPNRSQLCVSAEQSEGHWKVKNCEETLFYVCKKAGHVLSDAESGCQEGWERHGGFCYKIDTVLRSFDQASSGYYCPPALVTITNRFEQAFITSLIGSVVKMKDSYFWIALQDQNDTGEYTWKPAGQKPEPVQYTHWNAHQPRYSGGCVAMRGRHPPGRWEVKHCRHFKAMSLCKQPVENQEKAEYEERWPFHPCYLDWESEPGLASCFKVFHSEKVLMKRTWREAEAFCEEFGAHLASFAHIEEENFVNELLYSKFNWTEERQFWIGFNKRNPLNAGSWEWSDRIPVVSSFLDNNYFGEDARNCAVYKANKTLLPLHCGSKREWICKIPRDVKPKIPFWYQYDVPWLFYQDAEYLFHTFASEWLNFEFVCSWLHSDLLTIHSAHEQEFIHSKIKALSKYGASWWIGLQEERANDEFRWRDGTPVIYQNWDTGRERPVNNQSQRCGFISSITGLWGSEECSVSMPSICKRKKVLLIEKKKDTPKQHGTCPKGWLYFNYKCLLLNIPKDPNSWKNWMHAQHFCAEEGGTLVAIESEVEQAFITMNLFGQTTNVWIGLQNDDYETWLNGKPVVYSNWSPFDIINIPSHNTTDVQKHIPLCALLSSNPNFHFTGKWYFEDCGKEGYGFVCEKMQDTSGHGVNTSDMYPMPNTLEYGNRTYKIINANMTWYAAIKTCLMHGTQLVSITDQYHQSFLTVVLNRLGYAHWIGLFTTDNGLNFDWSDGTKSSFTFWKDEESSLLGDCVFADTNGLWHSTACESFLQGAICHVPPETRQSEHPELCSETSIPWIKFKSNCYSFSTVLDRMSFEAAHEFCKKEGSNLLTIKDEAENAFLLEELFAFGSSVQMVWLNAQFDGNNETIKWFDGTPTDQSNWGIRKPDTDYFKPHHCVALRIPEGLQLSLCQEKKGFICKMEADIRTAEELPEKGPSHSIIPLAVVLTLIVIVAICTLSFCIYKHNGGFFRRLAGFRNPYYPATNFSTVHLEENILISDLEKSDQ.

The signal sequence occupies residues 1–22; sequence MLLSPSLLLPLLLLLGAPRGCA. At 23-1398 the chain is on the extracellular side; it reads EGVAAALTPE…ELPEKGPSHS (1376 aa). The 124-residue stretch at 40 to 163 folds into the Ricin B-type lectin domain; the sequence is KGIFVIQSES…GSGGGDICEY (124 aa). 17 cysteine pairs are disulfide-bonded: cysteine 53–cysteine 66, cysteine 91–cysteine 108, cysteine 180–cysteine 206, cysteine 194–cysteine 221, cysteine 262–cysteine 356, cysteine 332–cysteine 348, cysteine 408–cysteine 503, cysteine 480–cysteine 495, cysteine 619–cysteine 636, cysteine 701–cysteine 798, cysteine 776–cysteine 790, cysteine 842–cysteine 939, cysteine 916–cysteine 931, cysteine 1069–cysteine 1089, cysteine 1211–cysteine 1225, cysteine 1282–cysteine 1378, and cysteine 1356–cysteine 1370. A glycan (N-linked (GlcNAc...) asparagine) is linked at asparagine 95. The region spanning 175 to 223 is the Fibronectin type-II domain; sequence AHGMPCMFPFQYNHQWHHECTREGREDDLLWCATTSRYERDEKWGFCPD. C-type lectin domains lie at 240–357, 387–504, 524–645, 675–799, 821–940, 967–1098, 1123–1234, and 1259–1379; these read NSHI…YVCK, YNRN…YVCK, HGGF…MSLC, GLAS…WICK, YQDA…SICK, FNYK…GFVC, YGNR…GAIC, and FKSN…FICK. Asparagine 456 carries an N-linked (GlcNAc...) asparagine glycan. The helical transmembrane segment at 1399–1419 threads the bilayer; sequence IIPLAVVLTLIVIVAICTLSF. At 1420 to 1464 the chain is on the cytoplasmic side; sequence CIYKHNGGFFRRLAGFRNPYYPATNFSTVHLEENILISDLEKSDQ. The short motif at 1437-1443 is the Endocytosis signal element; it reads NPYYPAT.

As to quaternary structure, interacts with sPLA2-IB/PLA2G1B; this interaction mediates intracellular signaling as well as clearance of extracellular sPLA2-IB/PLA2G1B via endocytotic pathway. Interacts with sPLA2-X/PLA2G10; this interaction mediates sPLA2-X/PLA2G10 clearance and inactivation. The secretory phospholipase A2 receptor form may be produced by the action of metalloproteinases. It contains all extracellular domains and only lacks transmembrane and cytosolic regions. It is however unclear whether this form is produced by proteolytic cleavage as suggested by some experiments, or by alternative splicing.

It localises to the cell membrane. Its subcellular location is the secreted. In terms of biological role, receptor for secretory phospholipase A2 (sPLA2). Also able to bind to snake PA2-like toxins. Although its precise function remains unclear, binding of sPLA2 to its receptor participates in both positive and negative regulation of sPLA2 functions as well as clearance of sPLA2. Binding of sPLA2-IB/PLA2G1B induces various effects depending on the cell type, such as activation of the mitogen-activated protein kinase (MAPK) cascade to induce cell proliferation, the production of lipid mediators, selective release of arachidonic acid in bone marrow-derived mast cells. In neutrophils, binding of sPLA2-IB/PLA2G1B can activate p38 MAPK to stimulate elastase release and cell adhesion. May be involved in responses in pro-inflammatory cytokine productions during endotoxic shock. Also has endocytic properties and rapidly internalizes sPLA2 ligands, which is particularly important for the clearance of extracellular sPLA2s to protect their potent enzymatic activities. The soluble secretory phospholipase A2 receptor form is circulating and acts as a negative regulator of sPLA2 functions by blocking the biological functions of sPLA2-IB/PLA2G1B and sPLA2-X/PLA2G10. This is Secretory phospholipase A2 receptor (PLA2R1) from Pongo abelii (Sumatran orangutan).